A 371-amino-acid polypeptide reads, in one-letter code: 4-hydroxy-3-methylbut-2-en-1-yl diphosphate synthase (flavodoxin) (371 aa).

Residues Cys-270, Cys-273, Cys-305, and Glu-312 each contribute to the [4Fe-4S] cluster site.

This sequence belongs to the IspG family. It depends on [4Fe-4S] cluster as a cofactor.

The enzyme catalyses (2E)-4-hydroxy-3-methylbut-2-enyl diphosphate + oxidized [flavodoxin] + H2O + 2 H(+) = 2-C-methyl-D-erythritol 2,4-cyclic diphosphate + reduced [flavodoxin]. It functions in the pathway isoprenoid biosynthesis; isopentenyl diphosphate biosynthesis via DXP pathway; isopentenyl diphosphate from 1-deoxy-D-xylulose 5-phosphate: step 5/6. Its function is as follows. Converts 2C-methyl-D-erythritol 2,4-cyclodiphosphate (ME-2,4cPP) into 1-hydroxy-2-methyl-2-(E)-butenyl 4-diphosphate. This chain is 4-hydroxy-3-methylbut-2-en-1-yl diphosphate synthase (flavodoxin), found in Shewanella baltica (strain OS223).